The sequence spans 174 residues: uncharacterized protein (174 aa).

An N-acetyltransferase domain is found at 42 to 174 (SNTKNINLYE…GVKGMFWYPR (133 aa)).

It belongs to the acetyltransferase family. Ycf52 subfamily.

The protein localises to the plastid. It is found in the chloroplast. This is an uncharacterized protein from Porphyra purpurea (Red seaweed).